Consider the following 414-residue polypeptide: Mannan endo-1,4-beta-mannosidase 3 (414 aa).

A signal peptide spans 1-19 (MKCLCFVVLLAILIAQNSS). 2 N-linked (GlcNAc...) asparagine glycosylation sites follow: N17 and N75. A substrate-binding site is contributed by W87. N133 and N153 each carry an N-linked (GlcNAc...) asparagine glycan. N202 is a binding site for substrate. The active-site Proton donor is the E203. Substrate is bound at residue Y283. The active-site Nucleophile is E323. The N-linked (GlcNAc...) asparagine glycan is linked to N343. Position 365 (W365) interacts with substrate. N-linked (GlcNAc...) asparagine glycosylation is present at N386.

It belongs to the glycosyl hydrolase 5 (cellulase A) family. In terms of tissue distribution, expressed in leaves, flowers, siliques and seeds.

It is found in the secreted. It carries out the reaction Random hydrolysis of (1-&gt;4)-beta-D-mannosidic linkages in mannans, galactomannans and glucomannans.. The polypeptide is Mannan endo-1,4-beta-mannosidase 3 (MAN3) (Arabidopsis thaliana (Mouse-ear cress)).